The chain runs to 215 residues: Adenylate kinase (215 aa).

14-19 (GVGKGT) contacts ATP. Residues 34-63 (STGDIFRSVMQEQGALSQTLAHYMNQGLYV) form an NMP region. AMP contacts are provided by residues threonine 35, arginine 40, 61 to 63 (LYV), 91 to 94 (GYPR), and glutamine 98. An LID region spans residues 128–165 (NRLVCPSCGSVYNKQSKPPLKANQCDRCHATLQARNDD). Residue arginine 129 participates in ATP binding. Zn(2+) is bound by residues cysteine 132 and cysteine 135. 138-139 (VY) lines the ATP pocket. Zn(2+) is bound by residues cysteine 152 and cysteine 155. AMP contacts are provided by arginine 162 and arginine 173. Residue glutamine 211 participates in ATP binding.

It belongs to the adenylate kinase family. As to quaternary structure, monomer.

The protein resides in the cytoplasm. The catalysed reaction is AMP + ATP = 2 ADP. Its pathway is purine metabolism; AMP biosynthesis via salvage pathway; AMP from ADP: step 1/1. Its function is as follows. Catalyzes the reversible transfer of the terminal phosphate group between ATP and AMP. Plays an important role in cellular energy homeostasis and in adenine nucleotide metabolism. The polypeptide is Adenylate kinase (Mycoplasma pneumoniae (strain ATCC 29342 / M129 / Subtype 1) (Mycoplasmoides pneumoniae)).